We begin with the raw amino-acid sequence, 502 residues long: Maturase K (502 aa).

It belongs to the intron maturase 2 family. MatK subfamily.

It is found in the plastid. The protein resides in the chloroplast. Functionally, usually encoded in the trnK tRNA gene intron. Probably assists in splicing its own and other chloroplast group II introns. The protein is Maturase K of Sisymbrium irio (London rocket).